A 445-amino-acid chain; its full sequence is Phosphoglucosamine mutase (445 aa).

The active-site Phosphoserine intermediate is the S102. Mg(2+)-binding residues include S102, D241, D243, and D245. Phosphoserine is present on S102.

It belongs to the phosphohexose mutase family. The cofactor is Mg(2+). Post-translationally, activated by phosphorylation.

It catalyses the reaction alpha-D-glucosamine 1-phosphate = D-glucosamine 6-phosphate. In terms of biological role, catalyzes the conversion of glucosamine-6-phosphate to glucosamine-1-phosphate. In Pectobacterium atrosepticum (strain SCRI 1043 / ATCC BAA-672) (Erwinia carotovora subsp. atroseptica), this protein is Phosphoglucosamine mutase.